We begin with the raw amino-acid sequence, 1118 residues long: Constitutive coactivator of PPAR-gamma-like protein 1 (1118 aa).

The segment at 339-405 (PPHYLAARPG…SLSEPAPLTL (67 aa)) is interaction with YES1, SRC and FYN. Residues 374 to 533 (AKPVAPQVPS…GTVQPIPCLL (160 aa)) are disordered. Residues 376–396 (PVAPQVPSPGGAPGQGPYPYS) are compositionally biased toward low complexity. Composition is skewed to polar residues over residues 405 to 420 (LDTS…SYSN) and 435 to 447 (SPIN…SPNH). Over residues 481 to 502 (GWEKTGSHSEPQARGDPGDQTK) the composition is skewed to basic and acidic residues. A compositionally biased stretch (polar residues) spans 503-514 (AEGSSTASSGSQ). A Phosphothreonine modification is found at Thr-655. Residues 829–1118 (ADQAAKVEKM…LEAAVLNKEE (290 aa)) form an RNA binding region. An omega-N-methylarginine mark is found at Arg-873, Arg-884, and Arg-886. The disordered stretch occupies residues 921-945 (AFSGSDSSRTSKSQGGVQPIPSQGG). Over residues 924 to 936 (GSDSSRTSKSQGG) the composition is skewed to polar residues. Lys-932 bears the N6-acetyllysine mark. A Phosphoserine modification is found at Ser-960. Omega-N-methylarginine occurs at positions 982 and 986. A Phosphoserine modification is found at Ser-1023. The segment at 1025–1102 (EEVAKELKSK…HLNALSTDSA (78 aa)) is disordered. Residues 1026–1037 (EVAKELKSKSGE) are compositionally biased toward basic and acidic residues. The span at 1038 to 1051 (SKSSAMSSDGSLAE) shows a compositional bias: low complexity. Phosphoserine occurs at positions 1044, 1045, and 1048. The span at 1076–1101 (HSESALNNDSKTCNTNPHLNALSTDS) shows a compositional bias: polar residues.

It belongs to the constitutive coactivator of PPAR-gamma family. Interacts with PURA. Interacts with SRC family protein kinases YES1, SRC and FYN. Upon tyrosine phosphorylation, interacts with PIK3R1. Interacts with IGF2BP1/IMP-1 in an RNA-dependent manner. In terms of processing, arg-982 is dimethylated, probably to asymmetric dimethylarginine. Post-translationally, phosphorylated on tyrosine by SRC family protein kinases upon oxidative stress, for instance following UV irradiation. Widely expressed. In gastric mucosa, detected in the bottom region of the foveolar epithelium (at protein level).

The protein localises to the cytoplasm. Its subcellular location is the cell membrane. In terms of biological role, component of the oxidative stress-induced survival signaling. May regulate the activation of SRC family protein kinases. May act as a scaffolding protein enabling SRC family protein kinases to phosphorylate and activate PI3-kinase. Binds IGF2 RNA and promotes the production of IGF2 protein. The protein is Constitutive coactivator of PPAR-gamma-like protein 1 (FAM120A) of Homo sapiens (Human).